A 214-amino-acid chain; its full sequence is Dephospho-CoA kinase (214 aa).

Positions 3–202 (KIGLTGGIGS…DRWLALAGAA (200 aa)) constitute a DPCK domain. An ATP-binding site is contributed by 11–16 (GSGKSR).

This sequence belongs to the CoaE family.

The protein localises to the cytoplasm. The catalysed reaction is 3'-dephospho-CoA + ATP = ADP + CoA + H(+). It functions in the pathway cofactor biosynthesis; coenzyme A biosynthesis; CoA from (R)-pantothenate: step 5/5. Functionally, catalyzes the phosphorylation of the 3'-hydroxyl group of dephosphocoenzyme A to form coenzyme A. The sequence is that of Dephospho-CoA kinase from Bordetella bronchiseptica (strain ATCC BAA-588 / NCTC 13252 / RB50) (Alcaligenes bronchisepticus).